The chain runs to 131 residues: Small ribosomal subunit protein uS8 (131 aa).

This sequence belongs to the universal ribosomal protein uS8 family. In terms of assembly, part of the 30S ribosomal subunit. Contacts proteins S5 and S12.

Functionally, one of the primary rRNA binding proteins, it binds directly to 16S rRNA central domain where it helps coordinate assembly of the platform of the 30S subunit. The protein is Small ribosomal subunit protein uS8 of Sulfurimonas denitrificans (strain ATCC 33889 / DSM 1251) (Thiomicrospira denitrificans (strain ATCC 33889 / DSM 1251)).